The sequence spans 178 residues: Fibroin heavy chain (178 aa).

The N-terminal stretch at 1–21 (MRVKTFVILCCALQYVAYTNA) is a signal peptide. Residues 149–178 (AVGAGAGAGAAAGSGAGAGAGYGAASGAGA) form a highly repetitive region.

As to quaternary structure, silk fibroin elementary unit consists in a disulfide-linked heavy and light chain and a p25 glycoprotein in molar ratios of 6:6:1. This results in a complex of approximately 2.3 MDa. The interchain disulfide bridge is essential for the intracellular transport and secretion of fibroin. In terms of tissue distribution, produced exclusively in the posterior (PSG) section of silk glands, which are essentially modified salivary glands.

Functionally, core component of the silk filament; a strong, insoluble and chemically inert fiber. The chain is Fibroin heavy chain (FIBH) from Bombyx mandarina (Wild silk moth).